The chain runs to 94 residues: Putative pterin-4-alpha-carbinolamine dehydratase (94 aa).

This sequence belongs to the pterin-4-alpha-carbinolamine dehydratase family.

It catalyses the reaction (4aS,6R)-4a-hydroxy-L-erythro-5,6,7,8-tetrahydrobiopterin = (6R)-L-erythro-6,7-dihydrobiopterin + H2O. The sequence is that of Putative pterin-4-alpha-carbinolamine dehydratase from Koribacter versatilis (strain Ellin345).